The primary structure comprises 433 residues: Dihydroorotase (433 aa).

Zn(2+) is bound by residues His-63 and His-65. Substrate contacts are provided by residues 65-67 (HLR) and Asn-97. 3 residues coordinate Zn(2+): Asp-155, His-182, and His-235. Asn-283 contacts substrate. Residue Asp-310 participates in Zn(2+) binding. Residue Asp-310 is part of the active site. A substrate-binding site is contributed by His-314.

Belongs to the metallo-dependent hydrolases superfamily. DHOase family. Class I DHOase subfamily. It depends on Zn(2+) as a cofactor.

The catalysed reaction is (S)-dihydroorotate + H2O = N-carbamoyl-L-aspartate + H(+). Its pathway is pyrimidine metabolism; UMP biosynthesis via de novo pathway; (S)-dihydroorotate from bicarbonate: step 3/3. Its function is as follows. Catalyzes the reversible cyclization of carbamoyl aspartate to dihydroorotate. This Anaeromyxobacter dehalogenans (strain 2CP-1 / ATCC BAA-258) protein is Dihydroorotase.